A 163-amino-acid polypeptide reads, in one-letter code: Urease accessory protein UreE (163 aa).

Positions 130–163 are disordered; sequence PFEPEPGAYGGGHGHTHSHDHSHQHDPAGHAHEH. Positions 146-163 are enriched in basic and acidic residues; that stretch reads HSHDHSHQHDPAGHAHEH.

It belongs to the UreE family.

Its subcellular location is the cytoplasm. Involved in urease metallocenter assembly. Binds nickel. Probably functions as a nickel donor during metallocenter assembly. In Alkalilimnicola ehrlichii (strain ATCC BAA-1101 / DSM 17681 / MLHE-1), this protein is Urease accessory protein UreE.